The following is a 298-amino-acid chain: tRNA pseudouridine synthase B (298 aa).

Asp46 serves as the catalytic Nucleophile.

This sequence belongs to the pseudouridine synthase TruB family. Type 1 subfamily.

The enzyme catalyses uridine(55) in tRNA = pseudouridine(55) in tRNA. In terms of biological role, responsible for synthesis of pseudouridine from uracil-55 in the psi GC loop of transfer RNAs. The polypeptide is tRNA pseudouridine synthase B (Paracoccus denitrificans (strain Pd 1222)).